A 1130-amino-acid polypeptide reads, in one-letter code: Roquin-1 (1130 aa).

C14, C17, C33, H35, C38, C50, and D53 together coordinate Zn(2+). An RING-type; degenerate zinc finger spans residues 14 to 54 (CPICTQTFDETIRKPISLGCGHTVCKMCLNKLHRKACPFDQ). Positions 128–176 (VLSRPMQRKLVTLVHCQLVEEEGRIRAMRAARSLGERTVTELILQHQNP) are HEPN-N. The tract at residues 177 to 326 (QQLSSNLWAA…MQSIIDKLQT (150 aa)) is ROQ. Positions 327–399 (PASFAQSVQE…GLVDYIQNHS (73 aa)) are HEPN-C. The C3H1-type zinc-finger motif lies at 413 to 441 (KYKTYMCRDMKQRGGCPRGASCTFAHSQE). Phosphoserine is present on S462. Disordered regions lie at residues 493–567 (LPNG…DLPP) and 722–750 (PHPAQIRPSYPRDPPYSRLPPPQPHPSLD). A compositionally biased stretch (polar residues) spans 497-506 (IASSGSTVTQ). Phosphoserine occurs at positions 531 and 535. 2 stretches are compositionally biased toward pro residues: residues 553–567 (NPHPVPPRGPTDLPP) and 732–746 (PRDPPYSRLPPPQPH). A phosphoserine mark is found at S861, S1107, and S1110. The interval 1100–1130 (KTSSLNLSEDSEGGGDNNDSQRSGVVSNSAP) is disordered. Residues 1116–1130 (NNDSQRSGVVSNSAP) are compositionally biased toward polar residues.

In terms of assembly, interacts with DDX6 and EDC4. Interacts with CCR4-NOT deadenylase complex. Interacts with RC3H1; the interaction is RNA independent. In terms of processing, proteolytically cleaved after Arg-510 and Arg-579 by MALT1 in activated CD4(+) T cells; cleavage at Arg-510 and Arg-579 is critical for promoting RC3H1 degradation in response to T-cell receptor (TCR) stimulation, and hence is necessary for prolonging the stability of a set of mRNAs controlling Th17 cell differentiation. As to expression, widely expressed, with highest levels in lymph node and thymus and slightly lesser amounts in brain, lung, and spleen (at protein level). Very weak expression in heart, muscle, and kidney (at protein level). Expressed in CD4(+) helper T-cells (at protein level).

It localises to the cytoplasm. The protein localises to the P-body. It is found in the cytoplasmic granule. It carries out the reaction S-ubiquitinyl-[E2 ubiquitin-conjugating enzyme]-L-cysteine + [acceptor protein]-L-lysine = [E2 ubiquitin-conjugating enzyme]-L-cysteine + N(6)-ubiquitinyl-[acceptor protein]-L-lysine.. Its pathway is protein modification; protein ubiquitination. Post-transcriptional repressor of mRNAs containing a conserved stem loop motif, called constitutive decay element (CDE), which is often located in the 3'-UTR, as in HMGXB3, ICOS, IER3, NFKBID, NFKBIZ, PPP1R10, TNF, TNFRSF4 and in many more mRNAs. Cleaves translationally inactive mRNAs harboring a stem-loop (SL), often located in their 3'-UTRs, during the early phase of inflammation in a helicase UPF1-independent manner. Binds to CDE and promotes mRNA deadenylation and degradation. This process does not involve miRNAs. In follicular helper T (Tfh) cells, represses of ICOS and TNFRSF4/Ox40 expression, thus preventing spontaneous Tfh cell differentiation, germinal center B-cell differentiation in the absence of immunization and autoimmunity. In resting or LPS-stimulated macrophages, controls inflammation by suppressing TNF expression. Also recognizes CDE in its own mRNA and in that of paralogous RC3H2, possibly leading to feedback loop regulation. Inhibits cooperatively with ZC3H12A the differentiation of helper T cells Th17 in lungs. They repress target mRNA encoding the Th17 cell-promoting factors IL6, ICOS, REL, IRF4, NFKBID and NFKBIZ. The cooperation requires RNA-binding by RC3H1 and the nuclease activity of ZC3H12A. Recognizes and binds mRNAs containing a hexaloop stem-loop motif, called alternative decay element (ADE). Together with ZC3H12A, destabilizes TNFRSF4/OX40 mRNA by binding to the conserved stem loop structure in its 3'UTR. Able to interact with double-stranded RNA. miRNA-binding protein that regulates microRNA homeostasis. Enhances DICER-mediated processing of pre-MIR146a but reduces mature MIR146a levels through an increase of 3' end uridylation. Both inhibits ICOS mRNA expression and they may act together to exert the suppression. Acts as a ubiquitin E3 ligase. Pairs with E2 enzymes UBE2A, UBE2B, UBE2D2, UBE2F, UBE2G1, UBE2G2 and UBE2L3 and produces polyubiquitin chains. Shows the strongest activity when paired with UBE2N:UBE2V1 or UBE2N:UBE2V2 E2 complexes and generate both short and long polyubiquitin chains. In Mus musculus (Mouse), this protein is Roquin-1.